We begin with the raw amino-acid sequence, 134 residues long: Translation initiation factor 2 subunit beta (134 aa).

Belongs to the eIF-2-beta/eIF-5 family. As to quaternary structure, heterotrimer composed of an alpha, a beta and a gamma chain.

In terms of biological role, eIF-2 functions in the early steps of protein synthesis by forming a ternary complex with GTP and initiator tRNA. This is Translation initiation factor 2 subunit beta from Pyrobaculum calidifontis (strain DSM 21063 / JCM 11548 / VA1).